The chain runs to 215 residues: MQPEQLAGCAVVLTVTVLTLRWMFRVDKGGEVSESRTSSSGVDNEPPVNSEHVHLVKTVFPHLESSAIAYDLQKTKNVDATIENALRGQPLPLPPRNSSLYARFPLSAGAGASSHSEETTPSHEVTSNVSSGSSASSLASNEHRSLIETYNLSSRISSSDNSSSSTGNEEVRNRSKLPSSKKEREELFRKRKEEMILAARKRMEGKIKGEKQDKN.

The N-terminal 29 residues, 1 to 29 (MQPEQLAGCAVVLTVTVLTLRWMFRVDKG), are a transit peptide targeting the mitochondrion. One can recognise a CUE domain in the interval 48 to 90 (VNSEHVHLVKTVFPHLESSAIAYDLQKTKNVDATIENALRGQP). A disordered region spans residues 109-191 (GAGASSHSEE…KEREELFRKR (83 aa)). Low complexity-rich tracts occupy residues 122–140 (SHEV…SLAS) and 153–165 (SSRI…SSSS). Over residues 180 to 191 (SKKEREELFRKR) the composition is skewed to basic and acidic residues.

The protein resides in the mitochondrion. The sequence is that of CUE domain-containing protein 4, mitochondrial from Schizosaccharomyces pombe (strain 972 / ATCC 24843) (Fission yeast).